We begin with the raw amino-acid sequence, 143 residues long: Hexaprenyl-diphosphate synthase small subunit ((2E,6E)-farnesyl-diphosphate specific) (143 aa).

In terms of assembly, dimer of heterodimer or heterotetramer composed of a small (Hexs-a) and large (Hexs-B) subunit.

It catalyses the reaction 3 isopentenyl diphosphate + (2E,6E)-farnesyl diphosphate = all-trans-hexaprenyl diphosphate + 3 diphosphate. In terms of biological role, catalyzes the condensation of three molecules of isopentenyl diphosphate with farnesyl diphosphate (FPP) to yield (all-E)-hexaprenyl diphosphate (HexPP; C30), the precursor of the prenyl side chain of menaquinone-6. Large subunit Hexs-B catalyzes the condensation reaction and the final product chain length is cooperatively regulated by both the Hexs-A and Hexs-B subunits using the whole size of the hydrophobic cleft as a ruler. The sequence is that of Hexaprenyl-diphosphate synthase small subunit ((2E,6E)-farnesyl-diphosphate specific) (hexs-a) from Micrococcus luteus (Micrococcus lysodeikticus).